Reading from the N-terminus, the 170-residue chain is Interferon gamma (170 aa).

An N-terminal signal peptide occupies residues 1–20 (MNSRLCIMALLLCFSQALLG). N-linked (GlcNAc...) asparagine glycans are attached at residues asparagine 36 and asparagine 103.

This sequence belongs to the type II (or gamma) interferon family. As to quaternary structure, homodimer. Interacts with IFNGR1 (via extracellular domain); this interaction promotes IFNGR1 dimerization. As to expression, released primarily from activated T lymphocytes.

It localises to the secreted. Its function is as follows. Type II interferon produced by immune cells such as T-cells and NK cells that plays crucial roles in antimicrobial, antiviral, and antitumor responses by activating effector immune cells and enhancing antigen presentation. Primarily signals through the JAK-STAT pathway after interaction with its receptor IFNGR1 to affect gene regulation. Upon IFNG binding, IFNGR1 intracellular domain opens out to allow association of downstream signaling components JAK2, JAK1 and STAT1, leading to STAT1 activation, nuclear translocation and transcription of IFNG-regulated genes. Many of the induced genes are transcription factors such as IRF1 that are able to further drive regulation of a next wave of transcription. Plays a role in class I antigen presentation pathway by inducing a replacement of catalytic proteasome subunits with immunoproteasome subunits. In turn, increases the quantity, quality, and repertoire of peptides for class I MHC loading. Increases the efficiency of peptide generation also by inducing the expression of activator PA28 that associates with the proteasome and alters its proteolytic cleavage preference. Up-regulates as well MHC II complexes on the cell surface by promoting expression of several key molecules such as cathepsins B/CTSB, H/CTSH, and L/CTSL. Participates in the regulation of hematopoietic stem cells during development and under homeostatic conditions by affecting their development, quiescence, and differentiation. The chain is Interferon gamma (IFNG) from Sigmodon hispidus (Hispid cotton rat).